A 285-amino-acid polypeptide reads, in one-letter code: MPVDMAVQLYITSSPPLHHRFLSSYKDYRVRNLISVNCKPLRPCINTKNTHNTSLNPPCSVWKAPEPKAKKKVVFADSKGMSLTAVRVFSPCENKKSDSQVQFQLPKLEVALKPVQSRILAFRQPATEYMEFRKRLMKNSVCLESCTLQGHTLTGTIKVRNVSFEKSVQVRITFDSWENHRDIECTFLNDVCGCRDTDTFSFIIEIPACVLPQDSVEFCVSYTCGGKTHWDNNNGKNYALVTTHDEKKDKTKETDLLDPFRNQQKRNRFTADWNSLMIGIRGPTW.

Positions 72–75 (KVVF) match the PP1-binding motif motif. One can recognise a CBM21 domain in the interval 133 to 241 (RKRLMKNSVC…NNNGKNYALV (109 aa)).

In terms of assembly, interacts with PPP1CC catalytic subunit of PP1 and associates with glycogen. Forms complexes with glycogen phosphorylase, glycogen synthase and phosphorylase kinase which is necessary for its regulation of PP1 activity. Ubiquitously expressed in the examined tissues including brain, muscle, liver and spleen under normoxic condition. Its expression is higher in insulin sensitive tissues (liver and muscle) than in the brain and spleen. Significantly increased expression in the liver and muscle under short-term (1-12 hours) hypoxia exposure. Significantly increased expression after long-term (natural) hypoxia exposure in liver and spleen. No significant differences in expression in brain for any time periods.

In terms of biological role, acts as a glycogen-targeting subunit for PP1 and regulates its activity. Activates glycogen synthase, reduces glycogen phosphorylase activity and limits glycogen breakdown. In Clarias batrachus (Walking catfish), this protein is Protein phosphatase 1 regulatory subunit 3C.